The sequence spans 226 residues: Large ribosomal subunit protein uL1 (226 aa).

It belongs to the universal ribosomal protein uL1 family. Part of the 50S ribosomal subunit.

Functionally, binds directly to 23S rRNA. The L1 stalk is quite mobile in the ribosome, and is involved in E site tRNA release. Its function is as follows. Protein L1 is also a translational repressor protein, it controls the translation of the L11 operon by binding to its mRNA. The protein is Large ribosomal subunit protein uL1 of Selenomonas ruminantium.